Here is an 80-residue protein sequence, read N- to C-terminus: Ataxin-8 (80 aa).

Specifically found in brains from SCA8 patients (at protein level).

The protein localises to the nucleus. This chain is Ataxin-8 (ATXN8), found in Homo sapiens (Human).